Consider the following 140-residue polypeptide: FAD synthase (140 aa).

ATP is bound by residues 9-10, 14-17, and Asp-92; these read TF and HPGH.

The protein belongs to the archaeal FAD synthase family. Homodimer. A divalent metal cation serves as cofactor.

The catalysed reaction is FMN + ATP + H(+) = FAD + diphosphate. It functions in the pathway cofactor biosynthesis; FAD biosynthesis; FAD from FMN: step 1/1. In terms of biological role, catalyzes the transfer of the AMP portion of ATP to flavin mononucleotide (FMN) to produce flavin adenine dinucleotide (FAD) coenzyme. The chain is FAD synthase from Natronomonas pharaonis (strain ATCC 35678 / DSM 2160 / CIP 103997 / JCM 8858 / NBRC 14720 / NCIMB 2260 / Gabara) (Halobacterium pharaonis).